A 698-amino-acid polypeptide reads, in one-letter code: Methionine synthase reductase (698 aa).

One can recognise a Flavodoxin-like domain in the interval Leu5–Trp147. FMN is bound at residue Leu93 to Tyr124. The segment at Ala166–Pro247 is hinge. Phosphoserine occurs at positions 171 and 189. The region spanning Asp271 to Pro533 is the FAD-binding FR-type domain. Residue Lys291 participates in NADP(+) binding. FAD is bound by residues Arg451–Ser454 and Gly487–Thr490. NADP(+) contacts are provided by residues Ser610 to Arg611, Tyr624 to Gln626, and Asp659. Residue Trp697 participates in FAD binding.

As to quaternary structure, forms a multiprotein complex with MMACHC, MMADHC and MTR. The cofactor is FAD. FMN serves as cofactor. Found in all tissues tested, particularly abundant in skeletal muscle.

It is found in the cytoplasm. It catalyses the reaction 2 methylcob(III)alamin-[methionine synthase] + 2 S-adenosyl-L-homocysteine + NADP(+) + H(+) = 2 cob(II)alamin-[methionine synthase] + 2 S-adenosyl-L-methionine + NADPH. The enzyme catalyses 2 cob(II)alamin + A + 2 H2O + 2 H(+) = 2 aquacob(III)alamin + AH2. Its function is as follows. Key enzyme in methionine and folate homeostasis responsible for the reactivation of methionine synthase (MTR/MS) activity by catalyzing the reductive methylation of MTR-bound cob(II)alamin. Cobalamin (vitamin B12) forms a complex with MTR to serve as an intermediary in methyl transfer reactions that cycles between MTR-bound methylcob(III)alamin and MTR bound-cob(I)alamin forms, and occasional oxidative escape of the cob(I)alamin intermediate during the catalytic cycle leads to the inactive cob(II)alamin species. The processing of cobalamin in the cytosol occurs in a multiprotein complex composed of at least MMACHC, MMADHC, MTRR and MTR which may contribute to shuttle safely and efficiently cobalamin towards MTR in order to produce methionine. Also necessary for the utilization of methyl groups from the folate cycle, thereby affecting transgenerational epigenetic inheritance. Also acts as a molecular chaperone for methionine synthase by stabilizing apoMTR and incorporating methylcob(III)alamin into apoMTR to form the holoenzyme. Also serves as an aquacob(III)alamin reductase by reducing aquacob(III)alamin to cob(II)alamin; this reduction leads to stimulation of the conversion of apoMTR and aquacob(III)alamin to MTR holoenzyme. The chain is Methionine synthase reductase from Homo sapiens (Human).